We begin with the raw amino-acid sequence, 323 residues long: Porphobilinogen deaminase (323 aa).

Cys251 carries the post-translational modification S-(dipyrrolylmethanemethyl)cysteine.

Belongs to the HMBS family. Monomer. Requires dipyrromethane as cofactor.

It carries out the reaction 4 porphobilinogen + H2O = hydroxymethylbilane + 4 NH4(+). It functions in the pathway porphyrin-containing compound metabolism; protoporphyrin-IX biosynthesis; coproporphyrinogen-III from 5-aminolevulinate: step 2/4. Its pathway is porphyrin-containing compound metabolism; chlorophyll biosynthesis. Its function is as follows. Tetrapolymerization of the monopyrrole PBG into the hydroxymethylbilane pre-uroporphyrinogen in several discrete steps. The polypeptide is Porphobilinogen deaminase (hemC) (Nostoc sp. (strain PCC 7120 / SAG 25.82 / UTEX 2576)).